A 176-amino-acid chain; its full sequence is Tubulin polymerization-promoting protein family member 3 (176 aa).

The segment at 126 to 152 is disordered; sequence TDTSKYTGSHKERFDESGKGKGKGGRE. The span at 134–152 shows a compositional bias: basic and acidic residues; sequence SHKERFDESGKGKGKGGRE.

This sequence belongs to the TPPP family.

Its subcellular location is the cytoplasm. It is found in the cytoskeleton. In terms of biological role, regulator of microtubule dynamic that has microtubule bundling activity. This Xenopus tropicalis (Western clawed frog) protein is Tubulin polymerization-promoting protein family member 3 (tppp3).